Consider the following 1281-residue polypeptide: Angiotensin-converting enzyme (1281 aa).

A signal peptide spans 1-17 (MPAALGLLLPWLSLVGA). Topologically, residues 18–1241 (LQPGLEPPQS…MSVGTKQATA (1224 aa)) are extracellular. Peptidase M2 domains are found at residues 28–610 (DPTE…LGWP) and 629–1208 (IVDE…LGWP). N-linked (GlcNAc...) asparagine glycans are attached at residues N42, N62, N80, N99, and N148. C145 and C151 are disulfide-bonded. Y217 contributes to the chloride binding site. N304 carries an N-linked (GlcNAc...) asparagine glycan. C345 and C363 are disulfide-bonded. H376 is a Zn(2+) binding site. The active-site Proton acceptor 1 is the E377. Positions 380 and 404 each coordinate Zn(2+). The N-linked (GlcNAc...) asparagine glycan is linked to N495. Catalysis depends on H506, which acts as the Proton donor 1. Position 515 (R515) interacts with chloride. A disulfide bridge links C531 with C543. Residues N535, N573, N601, N643, N663, and N746 are each glycosylated (N-linked (GlcNAc...) asparagine). A disulfide bridge links C743 with C749. The chloride site is built by R777 and Y815. Cysteines 943 and 961 form a disulfide. Residue H974 participates in Zn(2+) binding. The active-site Proton acceptor 2 is the E975. Zn(2+)-binding residues include H978 and E1002. The chloride site is built by W1076 and R1080. H1104 acts as the Proton donor 2 in catalysis. A chloride-binding site is contributed by R1113. An intrachain disulfide couples C1129 to C1141. N1177 is a glycosylation site (N-linked (GlcNAc...) asparagine). The tract at residues 1201-1240 (NGEVLGWPEYSWTPYAVTEFHAATDTADFLGMSVGTKQAT) is juxtamembrane stalk. Residues 1242 to 1262 (GAWVLLALALVFLITSIFLGV) form a helical membrane-spanning segment. The Cytoplasmic segment spans residues 1263–1281 (KLFSSRRKAFKSSSEMELK).

It belongs to the peptidase M2 family. The cofactor is Zn(2+). Chloride serves as cofactor.

Its subcellular location is the cell membrane. It localises to the cytoplasm. It carries out the reaction Release of a C-terminal dipeptide, oligopeptide-|-Xaa-Yaa, when Xaa is not Pro, and Yaa is neither Asp nor Glu. Thus, conversion of angiotensin I to angiotensin II, with increase in vasoconstrictor activity, but no action on angiotensin II.. The enzyme catalyses angiotensin I + H2O = L-histidyl-L-leucine + angiotensin II. It catalyses the reaction bradykinin + H2O = L-Phe-L-Arg + bradykinin(1-7). The catalysed reaction is substance P + H2O = substance P(1-9) + L-Leu-L-Met-NH2. It carries out the reaction substance P + H2O = substance P(1-8) + Gly-L-Leu-L-Met-NH2. The enzyme catalyses substance P + H2O = L-Phe-L-Phe-Gly-L-Leu-L-Met-NH2 + substance P(1-6). It catalyses the reaction neurotensin + H2O = neurotensin(1-11) + L-isoleucyl-L-leucine. The catalysed reaction is goralatide + H2O = N-acetyl-L-seryl-L-aspartate + L-lysyl-L-proline. It carries out the reaction Met-enkephalin + H2O = L-phenylalanyl-L-methionine + L-tyrosylglycylglycine. The enzyme catalyses Leu-enkephalin + H2O = L-tyrosylglycylglycine + L-phenylalanyl-L-leucine. It catalyses the reaction Met-enkephalin-Arg-Phe + H2O = L-arginyl-L-phenylalanine + Met-enkephalin. In terms of biological role, dipeptidyl carboxypeptidase that removes dipeptides from the C-terminus of a variety of circulating hormones, such as angiotensin I, bradykinin or enkephalins, thereby playing a key role in the regulation of blood pressure, electrolyte homeostasis or synaptic plasticity. Composed of two similar catalytic domains, each possessing a functional active site, with different selectivity for substrates. Plays a major role in the angiotensin-renin system that regulates blood pressure and sodium retention by the kidney by converting angiotensin I to angiotensin II, resulting in an increase of the vasoconstrictor activity of angiotensin. Also able to inactivate bradykinin, a potent vasodilator, and therefore enhance the blood pressure response. Acts as a regulator of synaptic transmission by mediating cleavage of neuropeptide hormones, such as substance P, neurotensin or enkephalins. Catalyzes degradation of different enkephalin neuropeptides (Met-enkephalin, Leu-enkephalin, Met-enkephalin-Arg-Phe and possibly Met-enkephalin-Arg-Gly-Leu). Also acts as a regulator of hematopoietic stem cell differentiation by mediating degradation of hemoregulatory peptide N-acetyl-SDKP (AcSDKP). This is Angiotensin-converting enzyme from Gallus gallus (Chicken).